A 445-amino-acid chain; its full sequence is POU domain, class 5, transcription factor 1.2 (445 aa).

2 stretches are compositionally biased toward polar residues: residues 76 to 88 (SANQLGISGQGNP) and 164 to 182 (IFTSSPDKSGESGISSLDN). Disordered stretches follow at residues 76–116 (SANQ…PSLP) and 139–227 (TTVV…GEME). Low complexity predominate over residues 183–200 (SRCSSATSSSSGGTNVGT). The POU-specific domain occupies 218-292 (EEAPNSGEME…LLRSWLHEVE (75 aa)). Positions 312-371 (KRKHRTSIENNVKCTLENYFMQCSKPSAQEIAQIARELNMEKDVVRVWFCNRRQKGKRQV) form a DNA-binding region, homeobox.

This sequence belongs to the POU transcription factor family. Class-5 subfamily. In terms of assembly, interacts with the transcription factors tcf7l1/tcf3 and vegt. As to expression, initially (stage 9) expressed in all regions of the embryo, becoming localized to the ventroposterior regions by early neurula stages. In adults, expressed at a low level in the brain.

The protein resides in the nucleus. Functionally, transcription factor that binds to the octamer motif (5'-ATTTGCAT-3'). Antagonizes the activity of nodal/activin signaling during gastrulation to suppress mesendoderm formation. The sequence is that of POU domain, class 5, transcription factor 1.2 (pou5f1.2) from Xenopus laevis (African clawed frog).